Here is a 271-residue protein sequence, read N- to C-terminus: uncharacterized protein (271 aa).

Positions 1–20 (MPDLHTLPAGSRPERAIRNN) are disordered.

It belongs to the PEP2 family.

This is an uncharacterized protein from Aspergillus terreus (strain NIH 2624 / FGSC A1156).